A 207-amino-acid chain; its full sequence is Large ribosomal subunit protein bL25 (207 aa).

The protein belongs to the bacterial ribosomal protein bL25 family. CTC subfamily. In terms of assembly, part of the 50S ribosomal subunit; part of the 5S rRNA/L5/L18/L25 subcomplex. Contacts the 5S rRNA. Binds to the 5S rRNA independently of L5 and L18.

This is one of the proteins that binds to the 5S RNA in the ribosome where it forms part of the central protuberance. The sequence is that of Large ribosomal subunit protein bL25 from Brucella canis (strain ATCC 23365 / NCTC 10854 / RM-666).